The sequence spans 442 residues: Ribosomal protein uS12 methylthiotransferase RimO (442 aa).

Residues 5-117 form the MTTase N-terminal domain; it reads PSIGVVSLGC…VLDAIHAALP (113 aa). Cys-14, Cys-50, Cys-79, Cys-148, Cys-152, and Cys-155 together coordinate [4Fe-4S] cluster. The Radical SAM core domain maps to 134–371; it reads LTPPHYAYLK…MAVQEAISRQ (238 aa). The region spanning 374 to 441 is the TRAM domain; sequence QRRVGQRQRV…AHDLYGMVVS (68 aa).

Belongs to the methylthiotransferase family. RimO subfamily. It depends on [4Fe-4S] cluster as a cofactor.

It is found in the cytoplasm. It carries out the reaction L-aspartate(89)-[ribosomal protein uS12]-hydrogen + (sulfur carrier)-SH + AH2 + 2 S-adenosyl-L-methionine = 3-methylsulfanyl-L-aspartate(89)-[ribosomal protein uS12]-hydrogen + (sulfur carrier)-H + 5'-deoxyadenosine + L-methionine + A + S-adenosyl-L-homocysteine + 2 H(+). Its function is as follows. Catalyzes the methylthiolation of an aspartic acid residue of ribosomal protein uS12. The chain is Ribosomal protein uS12 methylthiotransferase RimO from Acidithiobacillus ferrooxidans (strain ATCC 53993 / BNL-5-31) (Leptospirillum ferrooxidans (ATCC 53993)).